A 272-amino-acid chain; its full sequence is Short-chain dehydrogenase srdC (272 aa).

Residues I15, D65, R127, Y173, K177, V206, and T208 each coordinate NADP(+). The active-site Proton donor is the Y173. The active-site Lowers pKa of active site Tyr is K177.

It belongs to the short-chain dehydrogenases/reductases (SDR) family.

Functionally, short-chain dehydrogenase; part of the gene cluster that mediates the biosynthesis of sordarial, a salicylic aldehyde structurally related to the phytotoxin pyriculol. The most interesting aspect of this pathway is formation of an aromatic product from the highly reducing polyketide synthase srdA. SrdA synthesizes a reduced polyketide chain from one molecule of acetyl-CoA and five molecules of malonyl-CoA. The polyketide chain is then reductively released as an aldehyde. The oxidoreductases srdC, srdD and srdE then oxidize one of the hydroxy groups to facilitate the intramolecular aldol condensation, followed by dehydration to yield a salicylic aldehyde. This aldehyde can undergo facile reduction by endogenous reductases to yield the alcohol 1-hydroxy-2-hydroxymethyl-3-pent-1,3-dienylbenzene. The flavin-dependent srdI counteract against the propensity of the aldehydes to be reduced under physiological conditions and is responsible for reoxidizing 1-hydroxy-2-hydroxymethyl-3-pent-1,3-dienylbenzene back to the salicylic aldehyde. This salicylic aldehyde is then selectively epoxidized by the cupin-domain-containing oxidoreductase srdB to yield the epoxide, which can be hydrolyzed stereoselectively by the hydrolase srdG to give the final product sordarial. The protein is Short-chain dehydrogenase srdC of Neurospora crassa (strain ATCC 24698 / 74-OR23-1A / CBS 708.71 / DSM 1257 / FGSC 987).